We begin with the raw amino-acid sequence, 407 residues long: Peptidase T (407 aa).

His-78 lines the Zn(2+) pocket. The active site involves Asp-80. Asp-141 serves as a coordination point for Zn(2+). Catalysis depends on Glu-175, which acts as the Proton acceptor. 3 residues coordinate Zn(2+): Glu-176, Asp-198, and His-380.

It belongs to the peptidase M20B family. It depends on Zn(2+) as a cofactor.

Its subcellular location is the cytoplasm. It catalyses the reaction Release of the N-terminal residue from a tripeptide.. Its function is as follows. Cleaves the N-terminal amino acid of tripeptides. This is Peptidase T from Clostridium novyi (strain NT).